A 119-amino-acid chain; its full sequence is Beta-2-microglobulin (119 aa).

The signal sequence occupies residues 1–20 (MSRSVALAVLALLSLSGLEA). Residues 25-114 (PKIQVYSRHP…VTLSGPRTVK (90 aa)) form the Ig-like C1-type domain. Residues C45 and C100 are joined by a disulfide bond.

Belongs to the beta-2-microglobulin family. Heterodimer of an alpha chain and a beta chain. Beta-2-microglobulin is the beta-chain of major histocompatibility complex class I molecules.

It localises to the secreted. Its function is as follows. Component of the class I major histocompatibility complex (MHC). Involved in the presentation of peptide antigens to the immune system. In Papio anubis (Olive baboon), this protein is Beta-2-microglobulin (B2M).